A 1074-amino-acid polypeptide reads, in one-letter code: Probable phospholipid-transporting ATPase tat-5 (1074 aa).

Residues 1–26 (MGKRKKNDESSSSSSQKPCVSSSSDD) form a disordered region. The span at 10–26 (SSSSSSQKPCVSSSSDD) shows a compositional bias: low complexity. The next 4 membrane-spanning stretches (helical) occupy residues 118 to 138 (FVPI…FLLM), 143 to 163 (FIPA…GFVL), 354 to 374 (LTKL…AMKG), and 378 to 398 (LWYR…PISL). Residue Asp-442 is the 4-aspartylphosphate intermediate of the active site. ATP contacts are provided by Asp-442, Lys-443, Thr-444, Glu-524, Phe-570, Lys-575, Lys-594, Arg-623, Thr-624, Thr-704, Gly-705, Asp-706, Arg-786, and Lys-792. Asp-442 contacts Mg(2+). Thr-444 provides a ligand contact to Mg(2+). Asp-813 provides a ligand contact to Mg(2+). 2 residues coordinate ATP: Asn-816 and Asp-817. Residue Asp-817 coordinates Mg(2+). The next 5 membrane-spanning stretches (helical) occupy residues 886–906 (AIFS…VLMV), 954–974 (IWVL…LLVF), 978–998 (FIHV…IMVA), 1006–1026 (WAML…LILF), and 1038–1058 (WVFI…LYIV).

It belongs to the cation transport ATPase (P-type) (TC 3.A.3) family. Type IV subfamily. Requires Mg(2+) as cofactor.

The protein localises to the cell membrane. It carries out the reaction ATP + H2O + phospholipidSide 1 = ADP + phosphate + phospholipidSide 2.. Plays a role in regulating membrane trafficking of cargo proteins during embryogenesis. Regulates snx-3 retromer-mediated endosomal sorting of mig-14, a transporter of Wnt egl-20 morphogen. Together with mon-2 and pad-1, may participate in the formation of endosomal carriers that direct mig-14 trafficking back to Golgi, away from lysosomal degradation. Required for Wnt egl-20 gradient formation along the anteroposterior body axis and migration of QL neuroblast descendants toward the posterior part. Maintains phosphatidylethanolamine (PE) asymmetry at the cell membrane and prevents the budding of ectosome vesicles that affect intercellular communication and morphogenesis. In Caenorhabditis elegans, this protein is Probable phospholipid-transporting ATPase tat-5 (tat-5).